Here is a 416-residue protein sequence, read N- to C-terminus: NADH-quinone oxidoreductase subunit H (416 aa).

A run of 9 helical transmembrane segments spans residues 16-36 (LILA…LAAI), 84-104 (PVYL…FAVI), 124-144 (LAVA…GIVL), 165-185 (VVSY…YAGT), 197-217 (STWY…SMVG), 260-280 (VSAL…PISL), 288-308 (WWPL…YIWL), 320-340 (FMAI…MIVA), and 353-373 (WASG…VILW).

The protein belongs to the complex I subunit 1 family. NDH-1 is composed of 14 different subunits. Subunits NuoA, H, J, K, L, M, N constitute the membrane sector of the complex.

The protein localises to the cell membrane. The catalysed reaction is a quinone + NADH + 5 H(+)(in) = a quinol + NAD(+) + 4 H(+)(out). Its function is as follows. NDH-1 shuttles electrons from NADH, via FMN and iron-sulfur (Fe-S) centers, to quinones in the respiratory chain. The immediate electron acceptor for the enzyme in this species is believed to be menaquinone. Couples the redox reaction to proton translocation (for every two electrons transferred, four hydrogen ions are translocated across the cytoplasmic membrane), and thus conserves the redox energy in a proton gradient. This subunit may bind ubiquinone. The sequence is that of NADH-quinone oxidoreductase subunit H from Mycobacterium sp. (strain KMS).